The primary structure comprises 368 residues: Transcription factor bHLH30 (368 aa).

The stretch at 3–30 forms a coiled coil; sequence AKKEEEEEEEEDSSEAMNNIQNYQNDLF. The 50-residue stretch at 173–222 folds into the bHLH domain; sequence AASKSHSEAERRRRERINNHLAKLRSILPNTTKTDKASLLAEVIQHVKEL. The tract at residues 333–368 is disordered; that stretch reads KSNVEESSSSGNAKRQRMSSHNTITIVEQQQQYNQR. Residues 337–368 are compositionally biased toward polar residues; that stretch reads EESSSSGNAKRQRMSSHNTITIVEQQQQYNQR.

As to quaternary structure, homodimer. Interacts with LHW.

The protein resides in the nucleus. This is Transcription factor bHLH30 (BHLH30) from Arabidopsis thaliana (Mouse-ear cress).